The following is an 88-amino-acid chain: MKTTLPISLDWSTEEVIDVVHFFQAIEQAYDQGIAREDLLGKYRRFKEIVPSKSEEKQLFRAYEQENDVSCYQTIKKAREEMEEHIQM.

The protein belongs to the UPF0223 family.

The sequence is that of UPF0223 protein BH2638 from Halalkalibacterium halodurans (strain ATCC BAA-125 / DSM 18197 / FERM 7344 / JCM 9153 / C-125) (Bacillus halodurans).